Consider the following 241-residue polypeptide: Ribosomal RNA small subunit methyltransferase G (241 aa).

S-adenosyl-L-methionine-binding positions include Gly96, Phe101, 119–121 (EAS), 147–148 (VE), and Arg166.

Belongs to the methyltransferase superfamily. RNA methyltransferase RsmG family.

It is found in the cytoplasm. It carries out the reaction guanosine(527) in 16S rRNA + S-adenosyl-L-methionine = N(7)-methylguanosine(527) in 16S rRNA + S-adenosyl-L-homocysteine. Specifically methylates the N7 position of guanine in position 527 of 16S rRNA. The chain is Ribosomal RNA small subunit methyltransferase G from Syntrophus aciditrophicus (strain SB).